The chain runs to 207 residues: Large ribosomal subunit protein uL4 (207 aa).

Residues arginine 45–isoleucine 78 are disordered. Residues glycine 60–glycine 71 show a composition bias toward basic residues.

It belongs to the universal ribosomal protein uL4 family. As to quaternary structure, part of the 50S ribosomal subunit.

Functionally, one of the primary rRNA binding proteins, this protein initially binds near the 5'-end of the 23S rRNA. It is important during the early stages of 50S assembly. It makes multiple contacts with different domains of the 23S rRNA in the assembled 50S subunit and ribosome. In terms of biological role, forms part of the polypeptide exit tunnel. This is Large ribosomal subunit protein uL4 from Pediococcus pentosaceus (strain ATCC 25745 / CCUG 21536 / LMG 10740 / 183-1w).